Consider the following 530-residue polypeptide: AarF domain-containing protein kinase 1 (530 aa).

In terms of domain architecture, Protein kinase spans 155–467 (SFDDTPLGTA…ASSFLNMSRC (313 aa)). ATP contacts are provided by residues 161-169 (LGTASLAQV) and K183. D315 serves as the catalytic Proton acceptor.

The protein belongs to the protein kinase superfamily. ADCK protein kinase family.

It localises to the mitochondrion. Appears to be essential for maintaining mitochondrial cristae formation and mitochondrial function by acting via YME1L1 in a kinase-independent manner to regulate essential mitochondrial structural proteins OPA1 and IMMT. The action of this enzyme is not yet clear. It is not known if it has protein kinase activity and what type of substrate it would phosphorylate (Ser, Thr or Tyr). This Homo sapiens (Human) protein is AarF domain-containing protein kinase 1.